A 106-amino-acid polypeptide reads, in one-letter code: Thioredoxin (106 aa).

Residue lysine 3 is modified to N6-acetyllysine. The Thioredoxin domain occupies 3–106 (KQIESKTAFQ…KLEATINELV (104 aa)). An N6-succinyllysine modification is found at lysine 8. Catalysis depends on nucleophile residues cysteine 32 and cysteine 35. A disulfide bond links cysteine 32 and cysteine 35. Residue lysine 39 is modified to N6-acetyllysine. 2 positions are modified to S-nitrosocysteine: cysteine 62 and cysteine 69. An S-nitrosocysteine; alternate modification is found at cysteine 73. Residue lysine 95 is modified to N6-acetyllysine; alternate. N6-succinyllysine; alternate is present on lysine 95.

Belongs to the thioredoxin family. In terms of assembly, homodimer; disulfide-linked. Interacts with TXNIP through the redox-active site. Interacts with MAP3K5 and CASP3. Interacts with APEX1; the interaction stimulates the FOS/JUN AP-1 DNA-binding activity in a redox-dependent manner. Post-translationally, in the fully reduced protein, both Cys-69 and Cys-73 are nitrosylated in response to nitric oxide (NO). When two disulfide bonds are present in the protein, only Cys-73 is nitrosylated. Cys-73 can serve as donor for nitrosylation of target proteins.

It localises to the nucleus. The protein resides in the cytoplasm. The protein localises to the secreted. Participates in various redox reactions through the reversible oxidation of its active center dithiol to a disulfide and catalyzes dithiol-disulfide exchange reactions. Plays a role in the reversible S-nitrosylation of cysteine residues in target proteins, and thereby contributes to the response to intracellular nitric oxide. Nitrosylates the active site Cys of CASP3 in response to nitric oxide (NO), and thereby inhibits caspase-3 activity. Induces the FOS/JUN AP-1 DNA binding activity in ionizing radiation (IR) cells through its oxidation/reduction status and stimulates AP-1 transcriptional activity. The polypeptide is Thioredoxin (TXN) (Pongo abelii (Sumatran orangutan)).